Consider the following 531-residue polypeptide: CTP synthase (531 aa).

An amidoligase domain region spans residues methionine 1 to leucine 267. Serine 13 is a CTP binding site. Serine 13 contacts UTP. Serine 14–isoleucine 19 serves as a coordination point for ATP. Tyrosine 54 provides a ligand contact to L-glutamine. ATP is bound at residue aspartate 71. Mg(2+) is bound by residues aspartate 71 and glutamate 141. CTP is bound by residues aspartate 148–glutamate 150, lysine 188–glutamine 193, and lysine 224. Residues lysine 188–glutamine 193 and lysine 224 each bind UTP. ATP is bound at residue arginine 240 to alanine 242. The 240-residue stretch at lysine 292–glutamate 531 folds into the Glutamine amidotransferase type-1 domain. Position 354 (glycine 354) interacts with L-glutamine. Cysteine 381 (nucleophile; for glutamine hydrolysis) is an active-site residue. Residues leucine 382–glutamine 385, glutamate 405, and arginine 462 contribute to the L-glutamine site. Catalysis depends on residues histidine 507 and glutamate 509.

It belongs to the CTP synthase family. As to quaternary structure, homotetramer.

It carries out the reaction UTP + L-glutamine + ATP + H2O = CTP + L-glutamate + ADP + phosphate + 2 H(+). It catalyses the reaction L-glutamine + H2O = L-glutamate + NH4(+). The catalysed reaction is UTP + NH4(+) + ATP = CTP + ADP + phosphate + 2 H(+). It participates in pyrimidine metabolism; CTP biosynthesis via de novo pathway; CTP from UDP: step 2/2. With respect to regulation, allosterically activated by GTP, when glutamine is the substrate; GTP has no effect on the reaction when ammonia is the substrate. The allosteric effector GTP functions by stabilizing the protein conformation that binds the tetrahedral intermediate(s) formed during glutamine hydrolysis. Inhibited by the product CTP, via allosteric rather than competitive inhibition. Functionally, catalyzes the ATP-dependent amination of UTP to CTP with either L-glutamine or ammonia as the source of nitrogen. Regulates intracellular CTP levels through interactions with the four ribonucleotide triphosphates. This chain is CTP synthase, found in Geobacillus kaustophilus (strain HTA426).